We begin with the raw amino-acid sequence, 257 residues long: Phosphonates import ATP-binding protein PhnC (257 aa).

Residues 4–248 (IKFKNVSKVY…VFSKIYGRTI (245 aa)) form the ABC transporter domain. 37 to 44 (GLSGAGKS) contributes to the ATP binding site.

The protein belongs to the ABC transporter superfamily. Phosphonates importer (TC 3.A.1.9.1) family. As to quaternary structure, the complex is composed of two ATP-binding proteins (PhnC), two transmembrane proteins (PhnE) and a solute-binding protein (PhnD).

It is found in the cell membrane. The enzyme catalyses phosphonate(out) + ATP + H2O = phosphonate(in) + ADP + phosphate + H(+). In terms of biological role, part of the ABC transporter complex PhnCDE involved in phosphonates import. Responsible for energy coupling to the transport system. This is Phosphonates import ATP-binding protein PhnC from Staphylococcus aureus (strain MRSA252).